Here is a 441-residue protein sequence, read N- to C-terminus: Asparagine--tRNA ligase, mitochondrial (441 aa).

The protein belongs to the class-II aminoacyl-tRNA synthetase family.

It is found in the mitochondrion. The catalysed reaction is tRNA(Asn) + L-asparagine + ATP = L-asparaginyl-tRNA(Asn) + AMP + diphosphate + H(+). This chain is Asparagine--tRNA ligase, mitochondrial (slm5), found in Schizosaccharomyces pombe (strain 972 / ATCC 24843) (Fission yeast).